Here is a 254-residue protein sequence, read N- to C-terminus: Trypsin 3A1 (254 aa).

Positions 1–20 (MNQFLFVSFCALLGLSQVSA) are cleaved as a signal peptide. The propeptide at 21-27 (ATLSSGR) is activation peptide. The region spanning 28–253 (IVGGFQIDIA…VRQWIREVSE (226 aa)) is the Peptidase S1 domain. A disulfide bond links Cys-53 and Cys-69. Catalysis depends on charge relay system residues His-68 and Asp-113. Intrachain disulfides connect Cys-178/Cys-194 and Cys-205/Cys-229. Catalysis depends on Ser-209, which acts as the Charge relay system.

It belongs to the peptidase S1 family. In terms of tissue distribution, midgut.

The protein resides in the secreted. It localises to the extracellular space. It carries out the reaction Preferential cleavage: Arg-|-Xaa, Lys-|-Xaa.. Functionally, major function may be to aid in digestion of the blood meal. The polypeptide is Trypsin 3A1 (Aedes aegypti (Yellowfever mosquito)).